The primary structure comprises 1506 residues: Transient receptor potential cation channel subfamily M member 2 (1506 aa).

The segment covering 1 to 11 (MESLDRRRTGS) has biased composition (basic and acidic residues). The interval 1–22 (MESLDRRRTGSEQEEGFGVQSR) is disordered. Topologically, residues 1–750 (MESLDRRRTG…WWGQLCVDNG (750 aa)) are cytoplasmic. ADP-D-ribose is bound by residues Thr173, Asn178, Arg301, Gly332, and Thr335. Residue Thr738 is modified to Phosphothreonine. Residues 751 to 767 (LWRIILCMLAFPLLFTG) lie within the membrane without spanning it. Residues 768–792 (FISFREKRLQALCRPARVRAFFNAP) lie on the Cytoplasmic side of the membrane. The chain crosses the membrane as a helical span at residues 793 to 813 (VVIFHMNILSYFAFLCLFAYV). At 814-824 (LMVDFQPSPSW) the chain is on the extracellular side. Residues 825–845 (CEYLIYLWLFSLVCEETRQLF) form a helical membrane-spanning segment. Glu840 and Gln843 together coordinate Ca(2+). Topologically, residues 846 to 864 (YDPDGCGLMKMASLYFSDF) are cytoplasmic. Residues 865–885 (WNKLDVGAILLFIVGLTCRLI) traverse the membrane as a helical segment. Asn866 is a binding site for Ca(2+). Residues 886 to 893 (PATLYPGR) are Extracellular-facing. Residues 894-914 (IILSLDFIMFCLRLMHIFTIS) form a helical membrane-spanning segment. Topologically, residues 915–926 (KTLGPKIIIVKR) are cytoplasmic. Residues 927–947 (MMKDVFFFLFLLAVWVVSFGV) form a helical membrane-spanning segment. At 948-967 (AKQAILIHNESRVDWIFRGV) the chain is on the extracellular side. The segment at residues 968 to 982 (VYHSYLTIFGQIPTY) is an intramembrane region (pore-forming). The short motif at 976–979 (FGQI) is the Selectivity filter element. The Extracellular portion of the chain corresponds to 983-1019 (IDGVNFSMDQCSPNGTDPYKPKCPESDWTGQAPAFPE). A disulfide bridge links Cys993 with Cys1005. The chain crosses the membrane as a helical span at residues 1020–1041 (WLTVTLLCLYLLFANILLLNLL). Residues 1042 to 1076 (IAMFNYTFQEVQEHTDQIWKFQRHDLIEEYHGRPP) are Cytoplasmic-facing. A Ca(2+)-binding site is contributed by Glu1070. Residues 1077 to 1095 (APPPLILLSHLQLLIKRIV) lie within the membrane without spanning it. The Cytoplasmic portion of the chain corresponds to 1096 to 1506 (LKIPAKRHKQ…KVASLFGAHF (411 aa)). The Nudix hydrolase domain occupies 1350 to 1501 (RWKRNQGGAI…KTILQKVASL (152 aa)). Ser1378 lines the ADP-D-ribose pocket. A Nudix box motif is present at residues 1386 to 1407 (GSREPGEMLPRKLKRVLRQEFW). 4 residues coordinate ADP-D-ribose: Asp1427, Arg1429, Tyr1488, and Asn1490.

The protein belongs to the transient receptor (TC 1.A.4) family. LTrpC subfamily. TRPM2 sub-subfamily. Homotetramer. Post-translationally, protein kinase C (PKC)-mediated phosphorylation of TRPM2 at Thr-738 counteracts the effect of cytosolic Ca(2+) and elevates the temperature threshold. Detected in the preoptic area of the hypothalamus, a brain area involved in body temperature control. Detected in beta-cells in pancreas islets (at protein level). Detected in brain cortex, striatum, hippocampus CA1, CA2 and CA3 layers, and in the Purkinje cell layer in cerebellum. Widely expressed, with highest levels in lung, spleen, eye and brain. Detected in dendritic cells and in polymorphonuclear neutrophils.

It is found in the cell membrane. Its subcellular location is the perikaryon. It localises to the cell projection. The protein localises to the cytoplasmic vesicle. The protein resides in the lysosome. The enzyme catalyses Ca(2+)(in) = Ca(2+)(out). The catalysed reaction is Na(+)(in) = Na(+)(out). Activated by intracellular ADP-ribose, beta-NAD (NAD(+)) and similar compounds, and by oxidative stress caused by reactive oxygen or nitrogen species. Ca(2+) and PI(4,5)P2 are required for channel opening by ADP-ribose. Activated by moderate heat (35 to 40 degrees Celsius). Activation by ADP-ribose and beta-NAD is strongly increased by moderate heat (35 to 40 degrees Celsius). Likewise, reactive oxygen species lower the threshold for activation by moderate heat (37 degrees Celsius). Inactivated by exposure to extracellular pH between 4.0 and 6.5; irreversibly inactivated when open channels are exposed to extracellular pH between 4.0 and 6.5, while pre-exposure of closed channels to extracellular pH 5.5 gives rise to currents that rapidly inactivate, but protects against irreversible inactivation. Inactivated by intracellular ATP. Activated by arachidonic acid. Inhibited by 2-aminoethyl diphenylborinate (2-APB). Nonselective, voltage-independent cation channel that mediates Na(+) and Ca(2+) influx, leading to increased cytoplasmic Ca(2+) levels. Functions as a ligand-gated ion channel, gated by intracellular adenosine diphosphate ribose (ADP-ribose), Ca(2+), warm temperature, and oxidative stress. The precise physiological activators are under debate; the true, physiological activators may be ADP-ribose and ADP-ribose-2'-phosphate. Binding of ADP-ribose to the cytoplasmic Nudix domain causes a conformation change; the channel is primed but still requires Ca(2+) binding to trigger channel opening. Extracellular Ca(2+) passes through the channel and increases channel activity. Also contributes to Ca(2+) release from intracellular stores in response to ADP-ribose. Plays a role in numerous processes that involve signaling via intracellular Ca(2+) levels. Besides, mediates the release of lysosomal Zn(2+) stores in response to reactive oxygen species, leading to increased cytosolic Zn(2+) levels. Plays a role in mediating behavorial and physiological responses to moderate heat and thereby contributes to body temperature homeostasis. Plays a role in insulin secretion, a process that requires increased cytoplasmic Ca(2+) levels. Required for normal IFNG and cytokine secretion and normal innate immune immunity in response to bacterial infection. Required for normal phagocytosis and cytokine release by macrophages exposed to zymosan (in vitro). Plays a role in dendritic cell differentiation and maturation, and in dendritic cell chemotaxis via its role in regulating cytoplasmic Ca(2+) levels. Plays a role in the regulation of the reorganization of the actin cytoskeleton and filopodia formation in response to reactive oxygen species via its function in increasing cytoplasmic Ca(2+) and Zn(2+) levels. Confers susceptibility to cell death following oxidative stress. This chain is Transient receptor potential cation channel subfamily M member 2 (Trpm2), found in Mus musculus (Mouse).